The sequence spans 95 residues: Small ribosomal subunit protein bS6 (95 aa).

This sequence belongs to the bacterial ribosomal protein bS6 family.

Binds together with bS18 to 16S ribosomal RNA. The polypeptide is Small ribosomal subunit protein bS6 (Corynebacterium jeikeium (strain K411)).